A 2116-amino-acid chain; its full sequence is MEKLLDEVLAPGGPYNLTVGSWVRDHVRSIVEGAWEVRDVVTAAQKRAIVAVIPRPVFTQMQVSDHPALHAISRYTRRHWIEWGPKEALHVLIDPSPGLLREVARVERRWVALCLHRTARKLATALAETAGEAWHADYVCALRGAPSGPFYVHPEDVPRGGRAVADRCLLYYTPMQMCELMRTIDATLLVAVDLWPVALAAHVGDDWDDLGIAWHLDHDGGCPADCRGAGAGPMPGYTRPCTTRIYQVLPDTAHPGRLYRCGPRLWTRDCAVAELSWEVAQHCGHQARVRAVRCTLPIRHVRSLQPSARVRLPDLVHLAEVGRWRWFSLPRPVFQRMLSYCKTLSPDAYYSERVFKFKNALSHSITLAGNVLQEGWKGTCAEEDALCAYVAFRAWQSNARLAGVMKGAKRCAADSLSVAGWLGTVWDAIKRFFGSVPLAERMEEWEQDAAVAAFDRGPLEDGGHHLDTVQPPKPLPRPEIAATWIVHAASADRHCACAPRCDVPRERPSAPAGPPDDEAIIPPWLFAECRTLRCREWDFEALRARADTAATPAPLAPRPARHPTVLYRHPAHHGPWLTLDEPGEADAALVLCDPLGQPLRGPERHFAVGAHMCAQARGLQAFVRVVPPPERPWADGGARTWAKFFRGCAWAQRLLGEPAVMHLPYTDGDVPQLIALALRTLAQQGAALALSVRDLPGGAAFDANAVTAAVRADPGQLALTSPPPDNPPPPRRARRSQRHADARGPPPPAPARDPPPPAPSPPAPPRAGDPASPISAEPADRARDAEPEVACEPGGPATPARADPDSDIVESYARAAGPVHLRVRNIMDPPPGCKVVVNAANEGLLAGSGVCGAIFASAAASLAEDCRRLAPCPTGEAVATPGHGCGYAHIIHAVAPRRPQDPAALEQSEALLERAYRSIVALAAARRWTCVACPLLGAGIYGWSAAESLRAALAAARTEPAERVSLHICHPDRATLMHASVLVGAGLAARRVSPPPTEPPASRPADDPGRSAQRTAPPPAAPPGDAAAPELRGCQGCELCRYTRVTNDRAYVNLWLERDRGATGWAMRIPEVVVYGPEHLAAHFPLNHYSVLKPAEVRPPRGMCGSDMWRCRGWQGMPQVRCTPSNAHAALCRIGIPPRVSTRGDERDPNTCWLRAAANVAQAARACGAYTSAGCPKCAYGRALSEARTHEDFAALSQRWIASHADASLDGTGDPLDPLMATVGCACSRVWVGSEHEAPPDHLLVSLHRAPNGPWGVVLEVRARPEGGNPTGHFVCAVGGGPRRVSDRPHLWLAVPLSRGGGTCAATDEGLAQAYYDDLEVRRLGDDAMARAALASVQRPRKGPYNIKVWNMAAGAGKTTRILAAFTREDLYVCPTNALLHEIQAKLRARDIDIKNAATYERALTKPLAAYRRIYIDEAFTLGGEYCAFVASQTTAEVICVGDRDQCGPHYANNCRTPVPDRWPTERSRHTWRFPDCWAARLRAGLDYDVEGEHAGTFACNLWDGRQVDLHLAFSRETVRRLHEAGIRAYTVREAQGMSVGTACIHVGRDGTDVALALTRDLAIVSLTRASDALYLHELEDGSLRAAGLSAFLDAGALAELKEVPAGIDRVVAVEQAPPPLPPADGIPEAQDVPPFCPRTLEELVFGRAGHPHYADLNRVTEGEREVRYMRISRHLLNKNHTEMPGTERVLSAVCAVRRYRAGEDGSTLRTAVARQHPRPFRQIPPPRVTAGVAQEWRMTYLRERIDLTDVYTQMGVAARELTDRYARRYPEIFAGMCTAQSLSVPAFLKATLKCVDAALGPRDTEDCHAAQGKAGLEIRAWAKEWVQVMSPHFRAIQKIIMRALRPQFLVAAGHTEPEVDAWWQAHYTTNAIEVDFTEFDMNQTLATRDVELEISAALLGLPCAEDYRALRAGSYCTLRELGSTETGCERTSGEPATLLHNTTVAMCMAMRMVPKGVRWAGIFQGDDMVIFLPEGARSAALKWTPSEVGLFGSHIPVKHVSTPTPSFCGHVGTAAGLFHDVMHQAIKVLCRRFDPDVLEEQQVALLDRLRGVYAALPDTVAANAAYYDYSAERVLAIVRELTAYARGRGLDHPATIGALEEIQTPYARANLHDAD.

The segment at 36–49 (EVRDVVTAAQKRAI) is required for efficient proteolysis and P150-P90 interaction. In terms of domain architecture, Alphavirus-like MT spans 57 to 247 (VFTQMQVSDH…TRPCTTRIYQ (191 aa)). Residues 715–805 (GQLALTSPPP…PATPARADPD (91 aa)) are disordered. Composition is skewed to pro residues over residues 721-730 (SPPPDNPPPP) and 744-767 (GPPPPAPARDPPPPAPSPPAPPRA). 3 short sequence motifs (pxxPxR; class II SH3-binding) span residues 727–732 (PPPPRR), 747–752 (PPAPAR), and 761–766 (PPAPPR). One can recognise a Macro domain in the interval 806-985 (SDIVESYARA…LMHASVLVGA (180 aa)). A disordered region spans residues 990 to 1028 (RRVSPPPTEPPASRPADDPGRSAQRTAPPPAAPPGDAAA). Residues 993-1002 (SPPPTEPPAS) are compositionally biased toward pro residues. One can recognise a Peptidase C27 domain in the interval 1000 to 1301 (PASRPADDPG…WLAVPLSRGG (302 aa)). C1152 (for cysteine protease activity) is an active-site residue. Positions 1152 to 1183 (CWLRAAANVAQAARACGAYTSAGCPKCAYGRA) are interaction with host CALM1. Zn(2+) contacts are provided by C1175, C1178, C1227, and H1273. The tract at residues 1193 to 1228 (FAALSQRWIASHADASLDGTGDPLDPLMATVGCACS) is EF-hand-like. H1273 functions as the For cysteine protease activity in the catalytic mechanism. A (+)RNA virus helicase ATP-binding domain is found at 1320–1468 (EVRRLGDDAM…VPDRWPTERS (149 aa)). 1352 to 1359 (MAAGAGKT) serves as a coordination point for a ribonucleoside 5'-triphosphate. Residues 1469–1609 (RHTWRFPDCW…ELKEVPAGID (141 aa)) enclose the (+)RNA virus helicase C-terminal domain. The interval 1700–1900 (YRAGEDGSTL…VELEISAALL (201 aa)) is involved in P150-P90 interaction. The 112-residue stretch at 1870-1981 (TNAIEVDFTE…FLPEGARSAA (112 aa)) folds into the RdRp catalytic domain. Positions 1902-1906 (LPCAE) match the Human RB1 binding motif.

In terms of assembly, interacts with RNA-directed RNA polymerase p90. Interacts with host CALM1; this interaction is necessary for the protease activity and viral infectivity. Interacts with host C1QBP. Interacts with the capsid protein. Interacts with human RB1/retinoblastoma protein. Interacts with protease/methyltransferase p150. The cofactor is Zn(2+). Specific enzymatic cleavage by its own cysteine protease yield mature proteins p150 and p90.

The protein localises to the host membrane. It is found in the host cytoplasm. The protein resides in the host perinuclear region. The enzyme catalyses RNA(n) + a ribonucleoside 5'-triphosphate = RNA(n+1) + diphosphate. It catalyses the reaction a ribonucleoside 5'-triphosphate + H2O = a ribonucleoside 5'-diphosphate + phosphate + H(+). The catalysed reaction is ATP + H2O = ADP + phosphate + H(+). In terms of biological role, probable principal replicase for the negative-strand DNA, which replicates the 40S (+) genomic RNA into (-) antigenomic RNA. It cannot replicate the (-) into (+) until cleaved into p150 and p90 mature proteins. Protease that cleaves the precursor polyprotein into two mature products. Together with RNA-directed RNA polymerase p90, replicates the 40S genomic and antigenomic RNA by recognizing replications specific signals. The heterodimer P150/p90 is probably the principal replicase for positive-strand genomic RNA and the 24S subgenomic RNA, which codes for structural proteins. Responsible for the mRNA-capping of the viral mRNAs. This function is necessary since all viral RNAs are synthesized in the cytoplasm, and host capping enzymes are restricted to the nucleus. Forms fibers late in the infection that may be involved in cell-to-cell spread of the virus RNA in the absence of virus particle formation. Functionally, together with protease/methyltransferase p150, replicates the 40S genomic and antigenomic RNA by recognizing replications specific signals. The heterodimer P150/p90 is probably the principal replicase for positive-strand genomic RNA and the 24S subgenomic RNA, which codes for structural proteins. A helicase activity is probably also present. This is Non-structural polyprotein p200 from Rubella virus (strain BRDII) (RUBV).